The chain runs to 433 residues: Glutamate-1-semialdehyde 2,1-aminomutase (433 aa).

An N6-(pyridoxal phosphate)lysine modification is found at lysine 272.

Belongs to the class-III pyridoxal-phosphate-dependent aminotransferase family. HemL subfamily. In terms of assembly, homodimer. It depends on pyridoxal 5'-phosphate as a cofactor.

Its subcellular location is the cytoplasm. The catalysed reaction is (S)-4-amino-5-oxopentanoate = 5-aminolevulinate. It functions in the pathway porphyrin-containing compound metabolism; protoporphyrin-IX biosynthesis; 5-aminolevulinate from L-glutamyl-tRNA(Glu): step 2/2. This Magnetococcus marinus (strain ATCC BAA-1437 / JCM 17883 / MC-1) protein is Glutamate-1-semialdehyde 2,1-aminomutase.